Here is a 692-residue protein sequence, read N- to C-terminus: uncharacterized protein (692 aa).

A chloroplast-targeting transit peptide spans 1–39; it reads MLRLPSSMPIVSFPANPNLLINPQPSWPSRRGNSAVVVS. A Protein kinase domain is found at 189–523; the sequence is EISPEPVAAA…RLESLLSESL (335 aa). ATP is bound by residues 195-203 and Lys218; that span reads VAAASLGQV. Asp343 (proton acceptor) is an active-site residue.

This sequence belongs to the protein kinase superfamily. ADCK protein kinase family.

It localises to the plastid. The protein localises to the chloroplast. It is found in the plastoglobule. This is an uncharacterized protein from Arabidopsis thaliana (Mouse-ear cress).